The primary structure comprises 86 residues: Co-chaperonin GroES (86 aa).

This sequence belongs to the GroES chaperonin family. In terms of assembly, heptamer of 7 subunits arranged in a ring. Interacts with the chaperonin GroEL.

The protein resides in the cytoplasm. Functionally, together with the chaperonin GroEL, plays an essential role in assisting protein folding. The GroEL-GroES system forms a nano-cage that allows encapsulation of the non-native substrate proteins and provides a physical environment optimized to promote and accelerate protein folding. GroES binds to the apical surface of the GroEL ring, thereby capping the opening of the GroEL channel. The polypeptide is Co-chaperonin GroES (Sulfurovum sp. (strain NBC37-1)).